Here is a 405-residue protein sequence, read N- to C-terminus: Accessory Sec system protein translocase subunit SecY2 (405 aa).

Transmembrane regions (helical) follow at residues 14–34 (LFTSFLLFIYVLGSRIILPFV), 65–85 (IFSVGLSPWMSAMILWQMFSF), 104–124 (MYLTLLIAVIQSLAVSLRLPV), 131–151 (ILVVLMNTILLIAGTFFLVWL), 156–176 (ASMGIGGSIVILLSSMVLNIP), 191–211 (GIIVLLALLTLVFSYLLALMY), 247–267 (MYVMSFLSVPAYLFILLGFIF), 285–305 (PLWVYVYISVLFLFSIIFAFV), 343–363 (FSVIGGLFNVIMAGGPMLFVL), and 368–388 (LLRLAMIPGLFMMFGGMIFTI).

Belongs to the SecY/SEC61-alpha family. SecY2 subfamily. In terms of assembly, component of the accessory SecA2/SecY2 protein translocase complex required to export cell wall proteins. May form heterotrimers with SecE and SecG subunits.

Its subcellular location is the cell membrane. In terms of biological role, part of the accessory SecA2/SecY2 system specifically required for export of possible cell wall proteins. The central subunit of a protein translocation channel. The protein is Accessory Sec system protein translocase subunit SecY2 of Streptococcus pneumoniae serotype 4 (strain ATCC BAA-334 / TIGR4).